The chain runs to 590 residues: Histone-binding protein N1/N2 (590 aa).

The interval 1-30 (MAEETAALSTEKTEDTSTAPSTSAEKADGI) is disordered. The TPR 1 repeat unit spans residues 36-69 (AKRLMGAGQKHLVMKDVRSAVNLFQEASSLLAKQ). The segment at 102 to 328 (ALEGMPEDDE…EKETEEEDVG (227 aa)) is disordered. Residues 106 to 120 (MPEDDEEEAEKEEDP) are compositionally biased toward acidic residues. 2 stretches are compositionally biased toward basic and acidic residues: residues 128 to 250 (LDEK…DAKE) and 262 to 275 (AEEK…ESKE). Residues 293–327 (EKMEEEEEGEDSEENEDGTEENEGTEEKETEEEDV) are compositionally biased toward acidic residues. TPR repeat units lie at residues 357–390 (AQAH…QKEH) and 399–432 (AETH…IEKR). The tract at residues 492–590 (GGSSGFSKEN…METATVESTA (99 aa)) is disordered. The span at 496 to 525 (GFSKENGSTSSSSAVEKSGDSTVPVTNCVS) shows a compositional bias: polar residues. The Nuclear localization signal signature appears at 531 to 537 (VRKKRKT). The span at 536 to 553 (KTEEESPLKDKDAKKSKQ) shows a compositional bias: basic and acidic residues.

This sequence belongs to the NASP family.

It localises to the nucleus. Its function is as follows. This protein is involved in nucleosome assembly. It is bound to H3 and H4 in the absence of DNA, but released from H3 and H4 in the presence of DNA. The protein is Histone-binding protein N1/N2 of Xenopus laevis (African clawed frog).